The sequence spans 72 residues: Translation initiation factor IF-1 (72 aa).

Residues 1–72 (MAKEDVIEIE…TRGRITYRFK (72 aa)) enclose the S1-like domain.

Belongs to the IF-1 family. As to quaternary structure, component of the 30S ribosomal translation pre-initiation complex which assembles on the 30S ribosome in the order IF-2 and IF-3, IF-1 and N-formylmethionyl-tRNA(fMet); mRNA recruitment can occur at any time during PIC assembly.

The protein resides in the cytoplasm. Its function is as follows. One of the essential components for the initiation of protein synthesis. Stabilizes the binding of IF-2 and IF-3 on the 30S subunit to which N-formylmethionyl-tRNA(fMet) subsequently binds. Helps modulate mRNA selection, yielding the 30S pre-initiation complex (PIC). Upon addition of the 50S ribosomal subunit IF-1, IF-2 and IF-3 are released leaving the mature 70S translation initiation complex. The chain is Translation initiation factor IF-1 from Streptococcus suis (strain 05ZYH33).